The following is a 383-amino-acid chain: Homeobox protein knotted-1-like 5 (383 aa).

2 disordered regions span residues 1–35 and 52–73; these read MSFN…HFSE and TTAD…ADTN. The region spanning 281–301 is the ELK domain; sequence ELKHELKQGFKEKIVDIREEI. The homeobox; TALE-type DNA-binding region spans 302–365; it reads MRKRRAGKLP…NQRKRNWNSN (64 aa). The interval 361 to 383 is disordered; it reads NWNSNSSTSSTLTKNKRKRTGKS. A compositionally biased stretch (low complexity) spans 362–373; the sequence is WNSNSSTSSTLT. Over residues 374 to 383 the composition is skewed to basic residues; it reads KNKRKRTGKS.

The protein belongs to the TALE/KNOX homeobox family. May form heterodimeric complex with the TALE/BELL protein BEL1, BLH1 and BLH2. Interacts with OFP1, OFP2, OFP3 and OFP4.

It localises to the nucleus. In Arabidopsis thaliana (Mouse-ear cress), this protein is Homeobox protein knotted-1-like 5 (KNAT5).